The primary structure comprises 303 residues: Recombination-associated protein RdgC (303 aa).

Belongs to the RdgC family.

The protein resides in the cytoplasm. It is found in the nucleoid. In terms of biological role, may be involved in recombination. The polypeptide is Recombination-associated protein RdgC (Shewanella loihica (strain ATCC BAA-1088 / PV-4)).